Here is a 185-residue protein sequence, read N- to C-terminus: Ribosome-recycling factor (185 aa).

Residues L142–D161 are disordered.

This sequence belongs to the RRF family.

The protein localises to the cytoplasm. Responsible for the release of ribosomes from messenger RNA at the termination of protein biosynthesis. May increase the efficiency of translation by recycling ribosomes from one round of translation to another. This chain is Ribosome-recycling factor, found in Paenarthrobacter aurescens (strain TC1).